Consider the following 49-residue polypeptide: Protein YlcJ (49 aa).

The signal sequence occupies residues 1-21 (MSLVLCFLLMSLFFMYSFVLS).

The sequence is that of Protein YlcJ from Escherichia coli (strain K12).